The sequence spans 173 residues: Telomerase RNA component interacting RNase (173 aa).

Residues 1-12 show a composition bias toward basic and acidic residues; sequence MAARGRRAEPPG. Residues 1–119 form a disordered region; it reads MAARGRRAEP…LSFVGKRRGG (119 aa). 2 stretches are compositionally biased toward low complexity: residues 14 to 23 and 43 to 52; these read EAPGPAGSGR and SGSSPVSSGV. A compositionally biased stretch (basic and acidic residues) spans 64–79; that stretch reads LFKRKMEEEQRQRQEE. Pro residues predominate over residues 80–90; the sequence is PPPGPQRPDPP. An N6-acetyllysine modification is found at lysine 143.

Part of the telomerase RNA 3' end complex which contains about 488 proteins.

In terms of biological role, exoribonuclease that is part of the telomerase RNA 3' end processing complex and which has the ability to cleave all four unpaired RNA nucleotides from the 5' end or 3' end with higher efficiency for purine bases. The polypeptide is Telomerase RNA component interacting RNase (Mus musculus (Mouse)).